A 572-amino-acid polypeptide reads, in one-letter code: Proline--tRNA ligase (572 aa).

It belongs to the class-II aminoacyl-tRNA synthetase family. ProS type 1 subfamily. In terms of assembly, homodimer.

The protein localises to the cytoplasm. It carries out the reaction tRNA(Pro) + L-proline + ATP = L-prolyl-tRNA(Pro) + AMP + diphosphate. Functionally, catalyzes the attachment of proline to tRNA(Pro) in a two-step reaction: proline is first activated by ATP to form Pro-AMP and then transferred to the acceptor end of tRNA(Pro). As ProRS can inadvertently accommodate and process non-cognate amino acids such as alanine and cysteine, to avoid such errors it has two additional distinct editing activities against alanine. One activity is designated as 'pretransfer' editing and involves the tRNA(Pro)-independent hydrolysis of activated Ala-AMP. The other activity is designated 'posttransfer' editing and involves deacylation of mischarged Ala-tRNA(Pro). The misacylated Cys-tRNA(Pro) is not edited by ProRS. The protein is Proline--tRNA ligase of Yersinia enterocolitica serotype O:8 / biotype 1B (strain NCTC 13174 / 8081).